A 424-amino-acid chain; its full sequence is 3-isopropylmalate dehydratase large subunit (424 aa).

[4Fe-4S] cluster contacts are provided by C299, C359, and C362.

It belongs to the aconitase/IPM isomerase family. LeuC type 2 subfamily. As to quaternary structure, heterodimer of LeuC and LeuD. Requires [4Fe-4S] cluster as cofactor.

It carries out the reaction (2R,3S)-3-isopropylmalate = (2S)-2-isopropylmalate. The protein operates within amino-acid biosynthesis; L-leucine biosynthesis; L-leucine from 3-methyl-2-oxobutanoate: step 2/4. Functionally, catalyzes the isomerization between 2-isopropylmalate and 3-isopropylmalate, via the formation of 2-isopropylmaleate. The polypeptide is 3-isopropylmalate dehydratase large subunit (Hydrogenobaculum sp. (strain Y04AAS1)).